We begin with the raw amino-acid sequence, 301 residues long: Acetyl-coenzyme A carboxylase carboxyl transferase subunit beta (301 aa).

The CoA carboxyltransferase N-terminal domain occupies 25 to 294 (LWIKDPSTGE…NSDAPEHEKT (270 aa)). The tract at residues 282 to 301 (QPGNSDAPEHEKTEATDKAA) is disordered. Residues 288-301 (APEHEKTEATDKAA) are compositionally biased toward basic and acidic residues.

It belongs to the AccD/PCCB family. In terms of assembly, acetyl-CoA carboxylase is a heterohexamer composed of biotin carboxyl carrier protein (AccB), biotin carboxylase (AccC) and two subunits each of ACCase subunit alpha (AccA) and ACCase subunit beta (AccD).

The protein resides in the cytoplasm. It catalyses the reaction N(6)-carboxybiotinyl-L-lysyl-[protein] + acetyl-CoA = N(6)-biotinyl-L-lysyl-[protein] + malonyl-CoA. The protein operates within lipid metabolism; malonyl-CoA biosynthesis; malonyl-CoA from acetyl-CoA: step 1/1. Its function is as follows. Component of the acetyl coenzyme A carboxylase (ACC) complex. Biotin carboxylase (BC) catalyzes the carboxylation of biotin on its carrier protein (BCCP) and then the CO(2) group is transferred by the transcarboxylase to acetyl-CoA to form malonyl-CoA. This is Acetyl-coenzyme A carboxylase carboxyl transferase subunit beta from Brucella anthropi (strain ATCC 49188 / DSM 6882 / CCUG 24695 / JCM 21032 / LMG 3331 / NBRC 15819 / NCTC 12168 / Alc 37) (Ochrobactrum anthropi).